We begin with the raw amino-acid sequence, 131 residues long: uncharacterized protein (131 aa).

This is an uncharacterized protein from Schizosaccharomyces pombe (strain 972 / ATCC 24843) (Fission yeast).